A 225-amino-acid polypeptide reads, in one-letter code: Ribonuclease 3 (225 aa).

One can recognise an RNase III domain in the interval 4 to 133; it reads FEKLETLLGY…LIAAIYLDSN (130 aa). Glu46 provides a ligand contact to Mg(2+). Residue Asp50 is part of the active site. 2 residues coordinate Mg(2+): Asn119 and Glu122. The active site involves Glu122. Residues 158 to 225 form the DRBM domain; it reads DPKTALQEWA…AARSLLHRLK (68 aa).

The protein belongs to the ribonuclease III family. As to quaternary structure, homodimer. Requires Mg(2+) as cofactor.

It localises to the cytoplasm. The catalysed reaction is Endonucleolytic cleavage to 5'-phosphomonoester.. Functionally, digests double-stranded RNA. Involved in the processing of primary rRNA transcript to yield the immediate precursors to the large and small rRNAs (23S and 16S). Processes some mRNAs, and tRNAs when they are encoded in the rRNA operon. Processes pre-crRNA and tracrRNA of type II CRISPR loci if present in the organism. The chain is Ribonuclease 3 from Rickettsia prowazekii (strain Madrid E).